Here is a 310-residue protein sequence, read N- to C-terminus: MKIANSITELIGNTPLVKLNRLTEGLKAEVAVKLEFFNPGSSVKDRIAEAMIEGAEKAGKINKNTVIVEATSGNTGVGLAMVCAARGYKLAITMPESMSKERKMLLRAFGAELILTPAAEGMAGAIAKAKSLVDAHPDTYFMPRQFDNEANPEVHRKTTAEEIWRDTDGKVDVFVAGVGTGGTITGVGEVLKKYKPEVKVVAVEPEASPVLSGGEKGPHPIQGIGAGFIPTVLNTKIYDSITKVSNEAAFETARAIAEKEGILVGISSGAAVWSALQLAKQPENEGKLIVVLLPSYGERYLSTPLFADLA.

Position 44 is an N6-(pyridoxal phosphate)lysine (Lys-44). Pyridoxal 5'-phosphate-binding positions include Asn-74, 179–183 (GTGGT), and Ser-267.

This sequence belongs to the cysteine synthase/cystathionine beta-synthase family. Pyridoxal 5'-phosphate serves as cofactor.

The enzyme catalyses O-acetyl-L-serine + hydrogen sulfide = L-cysteine + acetate. It functions in the pathway amino-acid biosynthesis; L-cysteine biosynthesis; L-cysteine from L-serine: step 2/2. This chain is Cysteine synthase (cysK), found in Neisseria meningitidis serogroup B (strain ATCC BAA-335 / MC58).